The chain runs to 347 residues: MDLQAQLEELKTKTQEALKQLNGDHSKELQELRVAVLGKRGTLTELLKGLKDLSNDLRPVVGKQVNELRDFLTQAFEEQAKVVEAAKIQAKLDSESIDVTLPGRQMKQGYRHVLTQISEEIEDIFLGMGFQIVDGFEVEKDYYNFERMNLPKDHPARDMQDTFYITEDILLRTHTSPVQARTLDQHDFSKGPLKMISPGRVFRRDTDDATHSHQFHQIEGLVVGKSISMGDLKGTLEMIIKKMFGKERKIRLRPSYFPFTEPSVEVDVSCFKCGGKGCNVCKKTGWIEILGAGMVHPSVLEMSGVNAQEYSGFAFGLGQERIAMLRYGINDIRGFYQGDSRFSKQFK.

Mg(2+) is bound at residue glutamate 261.

The protein belongs to the class-II aminoacyl-tRNA synthetase family. Phe-tRNA synthetase alpha subunit type 1 subfamily. As to quaternary structure, tetramer of two alpha and two beta subunits. The cofactor is Mg(2+).

The protein localises to the cytoplasm. The catalysed reaction is tRNA(Phe) + L-phenylalanine + ATP = L-phenylalanyl-tRNA(Phe) + AMP + diphosphate + H(+). The polypeptide is Phenylalanine--tRNA ligase alpha subunit (Streptococcus equi subsp. zooepidemicus (strain MGCS10565)).